The primary structure comprises 686 residues: tRNA wybutosine-synthesizing protein 4 (686 aa).

The segment covering 1-10 (MGPRSRERRA) has biased composition (basic and acidic residues). The segment at 1-21 (MGPRSRERRAGAVQNTNDSSA) is disordered. S-adenosyl-L-methionine is bound by residues R59, G89, D114, 161-162 (DL), and E188.

The protein belongs to the methyltransferase superfamily. LCMT family. Interacts with RNF144B/IBRDC2.

The catalysed reaction is 7-[(3S)-3-amino-3-carboxypropyl]wyosine(37) in tRNA(Phe) + S-adenosyl-L-methionine = 7-[(3S)-(3-amino-3-methoxycarbonyl)propyl]wyosine(37) in tRNA(Phe) + S-adenosyl-L-homocysteine. The enzyme catalyses 7-[(3S)-(3-amino-3-methoxycarbonyl)propyl]wyosine(37) in tRNA(Phe) + S-adenosyl-L-methionine + CO2 = wybutosine(37) in tRNA(Phe) + S-adenosyl-L-homocysteine + 2 H(+). Its pathway is tRNA modification; wybutosine-tRNA(Phe) biosynthesis. Probable S-adenosyl-L-methionine-dependent methyltransferase that acts as a component of the wybutosine biosynthesis pathway. Wybutosine is a hyper modified guanosine with a tricyclic base found at the 3'-position adjacent to the anticodon of eukaryotic phenylalanine tRNA. May methylate the carboxyl group of leucine residues to form alpha-leucine ester residues. This Homo sapiens (Human) protein is tRNA wybutosine-synthesizing protein 4 (LCMT2).